Consider the following 686-residue polypeptide: Forkhead box protein P1 (686 aa).

Polar residues-rich tracts occupy residues 1–19 (MMQE…IQNG) and 279–292 (IINP…QLSV). 2 disordered regions span residues 1–23 (MMQE…ASGG) and 279–306 (IINP…EEHS). Residues 295-306 (PKRESLSHEEHS) are compositionally biased toward basic and acidic residues. The C2H2-type zinc finger occupies 315-340 (GVCKWPGCEAVCEDFQSFLKHLNSEH). The segment at 357-378 (VQQLELQLAKDKERLQAMMTHL) is leucine-zipper. The tract at residues 391–395 (PLNLV) is CTBP1-binding. A compositionally biased stretch (polar residues) spans 403–412 (TASEASPQSL). Residues 403–440 (TASEASPQSLPHTPTTPTAPITPVTQGPSVITTTSMHN) are disordered. Residues 413-427 (PHTPTTPTAPITPVT) show a composition bias toward low complexity. Over residues 428–439 (QGPSVITTTSMH) the composition is skewed to polar residues. Residues 474–564 (RPPFTYASLI…PQKISGNPSL (91 aa)) constitute a DNA-binding region (fork-head). The tract at residues 619-686 (MEHTNSNGSD…EDEPVNEDIE (68 aa)) is disordered. A compositionally biased stretch (polar residues) spans 621–632 (HTNSNGSDSSPG). Residues 676-686 (YEDEPVNEDIE) are compositionally biased toward acidic residues.

It is found in the nucleus. Functionally, transcriptional repressor. The polypeptide is Forkhead box protein P1 (FOXP1) (Gallus gallus (Chicken)).